The sequence spans 120 residues: NAD(P)H-quinone oxidoreductase subunit 3, chloroplastic (120 aa).

A run of 3 helical transmembrane segments spans residues 3–23 (ILEG…IPVI), 64–84 (MFAL…PWAV), and 89–109 (LGLS…IGLV).

Belongs to the complex I subunit 3 family. NDH is composed of at least 16 different subunits, 5 of which are encoded in the nucleus.

The protein localises to the plastid. It is found in the chloroplast thylakoid membrane. It catalyses the reaction a plastoquinone + NADH + (n+1) H(+)(in) = a plastoquinol + NAD(+) + n H(+)(out). The catalysed reaction is a plastoquinone + NADPH + (n+1) H(+)(in) = a plastoquinol + NADP(+) + n H(+)(out). Its function is as follows. NDH shuttles electrons from NAD(P)H:plastoquinone, via FMN and iron-sulfur (Fe-S) centers, to quinones in the photosynthetic chain and possibly in a chloroplast respiratory chain. The immediate electron acceptor for the enzyme in this species is believed to be plastoquinone. Couples the redox reaction to proton translocation, and thus conserves the redox energy in a proton gradient. The protein is NAD(P)H-quinone oxidoreductase subunit 3, chloroplastic of Nephroselmis olivacea (Green alga).